The sequence spans 89 residues: Small ribosomal subunit protein uS15 (89 aa).

It belongs to the universal ribosomal protein uS15 family. Part of the 30S ribosomal subunit. Forms a bridge to the 50S subunit in the 70S ribosome, contacting the 23S rRNA.

One of the primary rRNA binding proteins, it binds directly to 16S rRNA where it helps nucleate assembly of the platform of the 30S subunit by binding and bridging several RNA helices of the 16S rRNA. Its function is as follows. Forms an intersubunit bridge (bridge B4) with the 23S rRNA of the 50S subunit in the ribosome. The polypeptide is Small ribosomal subunit protein uS15 (Rhizobium rhizogenes (strain K84 / ATCC BAA-868) (Agrobacterium radiobacter)).